Reading from the N-terminus, the 192-residue chain is Molybdenum cofactor guanylyltransferase (192 aa).

GTP-binding positions include 10–12 (LAG), Lys23, Asn51, Asp69, and Asp99. Asp99 contacts Mg(2+).

The protein belongs to the MobA family. Monomer. The cofactor is Mg(2+).

It localises to the cytoplasm. It carries out the reaction Mo-molybdopterin + GTP + H(+) = Mo-molybdopterin guanine dinucleotide + diphosphate. In terms of biological role, transfers a GMP moiety from GTP to Mo-molybdopterin (Mo-MPT) cofactor (Moco or molybdenum cofactor) to form Mo-molybdopterin guanine dinucleotide (Mo-MGD) cofactor. The sequence is that of Molybdenum cofactor guanylyltransferase from Haemophilus influenzae (strain ATCC 51907 / DSM 11121 / KW20 / Rd).